Consider the following 101-residue polypeptide: Small ribosomal subunit protein uS14 (101 aa).

Belongs to the universal ribosomal protein uS14 family. As to quaternary structure, part of the 30S ribosomal subunit. Contacts proteins S3 and S10.

Binds 16S rRNA, required for the assembly of 30S particles and may also be responsible for determining the conformation of the 16S rRNA at the A site. This Ruegeria pomeroyi (strain ATCC 700808 / DSM 15171 / DSS-3) (Silicibacter pomeroyi) protein is Small ribosomal subunit protein uS14.